Consider the following 1318-residue polypeptide: Meiotically up-regulated gene 79 protein (1318 aa).

Disordered regions lie at residues proline 177 to tyrosine 198, glutamate 208 to threonine 227, and proline 360 to glycine 387. Low complexity predominate over residues alanine 364–proline 384. Residues methionine 1049–alanine 1158 enclose the PH domain.

It is found in the nucleus. Its function is as follows. Appears to have a role in sporulation. The chain is Meiotically up-regulated gene 79 protein (mug79) from Schizosaccharomyces pombe (strain 972 / ATCC 24843) (Fission yeast).